The chain runs to 450 residues: Glucose-6-phosphate isomerase (450 aa).

Glu290 serves as the catalytic Proton donor. Catalysis depends on residues His311 and Lys425.

Belongs to the GPI family.

Its subcellular location is the cytoplasm. The catalysed reaction is alpha-D-glucose 6-phosphate = beta-D-fructose 6-phosphate. The protein operates within carbohydrate biosynthesis; gluconeogenesis. Its pathway is carbohydrate degradation; glycolysis; D-glyceraldehyde 3-phosphate and glycerone phosphate from D-glucose: step 2/4. Functionally, catalyzes the reversible isomerization of glucose-6-phosphate to fructose-6-phosphate. The sequence is that of Glucose-6-phosphate isomerase from Listeria innocua serovar 6a (strain ATCC BAA-680 / CLIP 11262).